The chain runs to 495 residues: Ectonucleoside triphosphate diphosphohydrolase 2 (495 aa).

Residues 2-4 lie on the Cytoplasmic side of the membrane; the sequence is ARR. The helical transmembrane segment at 5–25 threads the bilayer; the sequence is AAAVLLLLALGCLLGILLLCL. Topologically, residues 26 to 465 are extracellular; the sequence is GSGDARGPPS…SHRSMLYNYW (440 aa). A glycan (N-linked (GlcNAc...) asparagine) is linked at Asn62. Cys73 and Cys97 are oxidised to a cystine. Glu162 acts as the Proton acceptor in catalysis. Residue 201–205 coordinates ATP; the sequence is GASTQ. 4 cysteine pairs are disulfide-bonded: Cys239-Cys286, Cys267-Cys311, Cys324-Cys329, and Cys378-Cys400. N-linked (GlcNAc...) asparagine glycosylation occurs at Asn297. N-linked (GlcNAc...) asparagine glycosylation is found at Asn418 and Asn444. The chain crosses the membrane as a helical span at residues 466–486; that stretch reads VILILLFVITTLTALLTAVYL. Residues 487-495 lie on the Cytoplasmic side of the membrane; it reads LRRSKSSTI.

Belongs to the GDA1/CD39 NTPase family. The cofactor is Ca(2+). Requires Mg(2+) as cofactor.

The protein resides in the membrane. In the nervous system, could hydrolyze ATP and other nucleotides to regulate purinergic neurotransmission. Hydrolyzes ADP only to a marginal extent. This is Ectonucleoside triphosphate diphosphohydrolase 2 (ENTPD2) from Gallus gallus (Chicken).